Here is a 490-residue protein sequence, read N- to C-terminus: Glutamyl-tRNA(Gln) amidotransferase subunit A (490 aa).

Active-site charge relay system residues include K80 and S155. S179 serves as the catalytic Acyl-ester intermediate.

The protein belongs to the amidase family. GatA subfamily. Heterotrimer of A, B and C subunits.

It catalyses the reaction L-glutamyl-tRNA(Gln) + L-glutamine + ATP + H2O = L-glutaminyl-tRNA(Gln) + L-glutamate + ADP + phosphate + H(+). Functionally, allows the formation of correctly charged Gln-tRNA(Gln) through the transamidation of misacylated Glu-tRNA(Gln) in organisms which lack glutaminyl-tRNA synthetase. The reaction takes place in the presence of glutamine and ATP through an activated gamma-phospho-Glu-tRNA(Gln). The sequence is that of Glutamyl-tRNA(Gln) amidotransferase subunit A from Brevibacillus brevis (strain 47 / JCM 6285 / NBRC 100599).